A 192-amino-acid chain; its full sequence is NF-kappa-B inhibitor-interacting Ras-like protein 1 (192 aa).

The tract at residues 1 to 192 is small GTPase-like; sequence MGKGCKVVVC…KSKGTPSNDI (192 aa). 11–18 provides a ligand contact to GTP; sequence GMASVGKT. The Effector region motif lies at 35–43; sequence TSDTQEDIY. Residues 61–65 and 120–123 each bind GTP; these read DTRGL and NKCE. Positions 169 to 192 are disordered; sequence TQPQSKSAFPLPGRKSKGTPSNDI.

The protein belongs to the small GTPase superfamily. Ras family. KappaB-Ras subfamily.

The protein resides in the cytoplasm. In terms of biological role, atypical Ras-like protein that acts as a potent regulator of NF-kappa-B activity by preventing the degradation of NF-kappa-B inhibitor beta (NFKBIB) by most signals, explaining why NFKBIB is more resistant to degradation. This chain is NF-kappa-B inhibitor-interacting Ras-like protein 1 (nkiras1), found in Danio rerio (Zebrafish).